Reading from the N-terminus, the 102-residue chain is Large ribosomal subunit protein bL21 (102 aa).

This sequence belongs to the bacterial ribosomal protein bL21 family. As to quaternary structure, part of the 50S ribosomal subunit. Contacts protein L20.

In terms of biological role, this protein binds to 23S rRNA in the presence of protein L20. The polypeptide is Large ribosomal subunit protein bL21 (Photorhabdus laumondii subsp. laumondii (strain DSM 15139 / CIP 105565 / TT01) (Photorhabdus luminescens subsp. laumondii)).